The following is a 307-amino-acid chain: Aspartate carbamoyltransferase catalytic subunit (307 aa).

Carbamoyl phosphate-binding residues include R59 and T60. K87 is an L-aspartate binding site. Carbamoyl phosphate-binding residues include R109, H137, and Q140. Residues R173 and R223 each coordinate L-aspartate. Carbamoyl phosphate-binding residues include G266 and P267.

This sequence belongs to the aspartate/ornithine carbamoyltransferase superfamily. ATCase family. In terms of assembly, heterododecamer (2C3:3R2) of six catalytic PyrB chains organized as two trimers (C3), and six regulatory PyrI chains organized as three dimers (R2).

The enzyme catalyses carbamoyl phosphate + L-aspartate = N-carbamoyl-L-aspartate + phosphate + H(+). It functions in the pathway pyrimidine metabolism; UMP biosynthesis via de novo pathway; (S)-dihydroorotate from bicarbonate: step 2/3. Functionally, catalyzes the condensation of carbamoyl phosphate and aspartate to form carbamoyl aspartate and inorganic phosphate, the committed step in the de novo pyrimidine nucleotide biosynthesis pathway. The chain is Aspartate carbamoyltransferase catalytic subunit from Helicobacter pylori (strain HPAG1).